A 287-amino-acid polypeptide reads, in one-letter code: Nematocyst expressed protein 6 (287 aa).

The signal sequence occupies residues 1–20 (MKGFIFAGVLVSALICLAEG). The 197-residue stretch at 53–249 (RAALRDRYLW…RQTNLMYKCN (197 aa)) folds into the Peptidase M12A domain. Cystine bridges form between Cys-95-Cys-248 and Cys-116-Cys-139. Position 146 (His-146) interacts with Zn(2+). Residue Glu-147 is part of the active site. Residues His-150 and His-156 each coordinate Zn(2+). The tract at residues 249–287 (NAQGDSELQPVNDEDEDKDGGDSKKKPDPKGPKPGEIEE) is disordered. Residues 268–287 (GGDSKKKPDPKGPKPGEIEE) show a composition bias toward basic and acidic residues.

It depends on Zn(2+) as a cofactor. In terms of tissue distribution, nematocyte and pharyngeal gland.

The protein resides in the secreted. The protein localises to the nematocyst. Functionally, metalloprotease. This chain is Nematocyst expressed protein 6, found in Nematostella vectensis (Starlet sea anemone).